A 483-amino-acid polypeptide reads, in one-letter code: MNMPLSLMQFAPALPEIFVLAMVSLILVIDAAVGDGKRYLAYGLSLVTLAGAAFLTVRDFSTLPVLALGGLFIDDPLSDVLKLFLYLTVAIVLVYSRDYLRVRGLYKGEFFVLALFALLGMMVMVSASHFLTLYLGLELLSLSLYAMVALQRDSSVATEAAMKYFVLGALASGMLLYGMSMVYGVTGSLALGDIAIVLQDGTDLRIPLVFGIVFVVAGLAFKLGAVPFHMWVPDVYHGAPTAMTLFVGSAPKIAAFAFVVRVLGQGLESQVSEWRDMLVILAVLSMAIGNIAAIAQSNLKRMFAYSTISHMGFMLLGVLAGSQNGYGAAMFYVLVYTLMTLGGFGMILLLSRAGFESDRLDDFKGLNRRSPWLAFVMLLLMFSMTGIPPTVGFYAKLAVLQAVVEIGYVWLAVAAVLFSLVGAFYYLRIVKLMYFDTPQDTAPIAPGIDARLLMSANGLAVLALGILPQPLMAVCVQAIGTSF.

The next 14 helical transmembrane spans lie at 13-33 (ALPEIFVLAMVSLILVIDAAV), 39-57 (YLAYGLSLVTLAGAAFLTV), 76-96 (PLSDVLKLFLYLTVAIVLVYS), 110-130 (FFVLALFALLGMMVMVSASHF), 131-151 (LTLYLGLELLSLSLYAMVALQ), 165-185 (FVLGALASGMLLYGMSMVYGV), 206-226 (IPLVFGIVFVVAGLAFKLGAV), 240-260 (PTAMTLFVGSAPKIAAFAFVV), 277-297 (MLVILAVLSMAIGNIAAIAQS), 302-322 (MFAYSTISHMGFMLLGVLAGS), 330-350 (MFYVLVYTLMTLGGFGMILLL), 373-393 (LAFVMLLLMFSMTGIPPTVGF), 406-426 (IGYVWLAVAAVLFSLVGAFYY), and 459-479 (LAVLALGILPQPLMAVCVQAI).

This sequence belongs to the complex I subunit 2 family. As to quaternary structure, NDH-1 is composed of 14 different subunits. Subunits NuoA, H, J, K, L, M, N constitute the membrane sector of the complex.

It localises to the cell inner membrane. The enzyme catalyses a quinone + NADH + 5 H(+)(in) = a quinol + NAD(+) + 4 H(+)(out). In terms of biological role, NDH-1 shuttles electrons from NADH, via FMN and iron-sulfur (Fe-S) centers, to quinones in the respiratory chain. The immediate electron acceptor for the enzyme in this species is believed to be ubiquinone. Couples the redox reaction to proton translocation (for every two electrons transferred, four hydrogen ions are translocated across the cytoplasmic membrane), and thus conserves the redox energy in a proton gradient. The protein is NADH-quinone oxidoreductase subunit N of Thiobacillus denitrificans (strain ATCC 25259 / T1).